Reading from the N-terminus, the 562-residue chain is Zinc finger protein 579 (562 aa).

The span at 1-11 (MDPQPPPPAQG) shows a compositional bias: pro residues. The segment at 1–45 (MDPQPPPPAQGSPPHRDRGRGRGRGRGRGRGRGRGRGGAGAPRAP) is disordered. Residues 17–35 (DRGRGRGRGRGRGRGRGRG) show a composition bias toward basic residues. 3 consecutive C2H2-type zinc fingers follow at residues 46 to 68 (LPCP…RLSH), 74 to 96 (HACP…LRGH), and 102 to 125 (LRCA…AQEH). An Omega-N-methylarginine modification is found at arginine 94. Disordered stretches follow at residues 120–154 (HLAQ…EGVE) and 166–199 (EEAT…AEAG). Basic and acidic residues predominate over residues 187–197 (DPRESEAKEAE). Serine 191 carries the phosphoserine modification. 2 consecutive C2H2-type zinc fingers follow at residues 267–289 (HQCS…RLVH) and 295–317 (FVCP…RRVH). Residues 321 to 377 (SLLAPLPGAGKKDDKASGGRNSGKGPEGGEGAECGGASEGGEGGHNGGDATPARPPA) form a disordered region. Positions 340–367 (RNSGKGPEGGEGAECGGASEGGEGGHNG) are enriched in gly residues. C2H2-type zinc fingers lie at residues 382–404 (FWCP…GVTH), 410–432 (FQCV…AQVH), and 439–461 (HPCP…QRCH). Serine 486 carries the post-translational modification Phosphoserine. The tract at residues 505-530 (AHIKEEPPSPGTPPQSPPAPPVFLSA) is disordered. Residues 512–525 (PSPGTPPQSPPAPP) are compositionally biased toward pro residues.

This sequence belongs to the krueppel C2H2-type zinc-finger protein family.

The protein resides in the nucleus. In terms of biological role, may be involved in transcriptional regulation. The sequence is that of Zinc finger protein 579 (Znf579) from Mus musculus (Mouse).